Reading from the N-terminus, the 453-residue chain is Nuclear and cytoplasmic polyadenylated RNA-binding protein PUB1 (453 aa).

Residues 1–67 (MSENNEEQHQ…PSVVPANAIT (67 aa)) are disordered. Serine 2 is subject to N-acetylserine. RRM domains follow at residues 75 to 152 (RVLY…WAFQ) and 162 to 240 (FNLF…WAAK). The interval 241–262 (RDNNNNNNYQQRRNYGNNNRGG) is disordered. Over residues 244–262 (NNNNNYQQRRNYGNNNRGG) the composition is skewed to low complexity. Position 260 is an omega-N-methylarginine (arginine 260). The interval 260–264 (RGGFR) is RNA-binding RGG-box. The 73-residue stretch at 341–413 (TTAYIGNIPH…RNLRTGWGKE (73 aa)) folds into the RRM 3 domain. The disordered stretch occupies residues 419–453 (PQQQQQGGQPLIMNDQQQPVMSEQQQQQQQQQQQQ). Residues 434–453 (QQQPVMSEQQQQQQQQQQQQ) show a composition bias toward low complexity.

As to quaternary structure, interacts with NAB2.

It localises to the cytoplasm. The protein resides in the nucleus. Its subcellular location is the P-body. It is found in the stress granule. May be associated with hnRNA within the nucleus and remains associated during nucleocytoplasmic mRNA transport, once the proteins are in the cytoplasm, disassembly of PUB1-RNA complexes may occur prior to PAB1 binding and formation of a translationally competent RNP complex. Binds to polyadenylated RNA; prefers to bind poly(rU); binds to T-rich single-stranded DNA. The chain is Nuclear and cytoplasmic polyadenylated RNA-binding protein PUB1 from Saccharomyces cerevisiae (strain ATCC 204508 / S288c) (Baker's yeast).